Here is a 138-residue protein sequence, read N- to C-terminus: Ribulose bisphosphate carboxylase small subunit (138 aa).

Belongs to the RuBisCO small chain family. Heterohexadecamer of 8 large and 8 small subunits.

Its subcellular location is the plastid. It is found in the chloroplast. Its function is as follows. RuBisCO catalyzes two reactions: the carboxylation of D-ribulose 1,5-bisphosphate, the primary event in carbon dioxide fixation, as well as the oxidative fragmentation of the pentose substrate in the photorespiration process. Both reactions occur simultaneously and in competition at the same active site. Although the small subunit is not catalytic it is essential for maximal activity. The sequence is that of Ribulose bisphosphate carboxylase small subunit from Pyropia katadae (Red alga).